Consider the following 78-residue polypeptide: Large ribosomal subunit protein bL28 (78 aa).

This sequence belongs to the bacterial ribosomal protein bL28 family.

The chain is Large ribosomal subunit protein bL28 from Francisella philomiragia subsp. philomiragia (strain ATCC 25017 / CCUG 19701 / FSC 153 / O#319-036).